A 465-amino-acid chain; its full sequence is MESLRIYNTLARDKQTFVPLQDGVVRMYVCGMTVYDYCHVGHARVMVVFDIVQRWLRTLGYNVTYVRNITDIDDKIIRRAVENGETIKSLTDRFIKALHEDADALGIQRPDIEPRATDFIPQMLGMIERLEANGYAYQASDGDVNYAVRKFANYGKLSGKSLEDLRAGERVAANDAKQDPLDFVLWKQAKPQEPADTGWDSKYGRGRPGWHIECSAMGCTLLGEHFDIHGGGQDLQFPHHENEIAQSEAATGQTFVNFWMHNGYVQIDNEKMSKSLNNFFTIREVLAQYDAEVVRFFIARAHYRSPLNYSDVHIDDARNALTRLYTALKDVTPDGAELDWNEAYAQRFQAAMNDDFNTPVAVSVLFELASEVNRTRDPALARQLRLLGAVIGLLGREPRAYLQQAAGAAAVGALEAAAIEAKIAARAAAKQAKDFAAADRIRSELLEAGVALEDKPGGLTEWRRV.

Cys-30 contacts Zn(2+). The 'HIGH' region motif lies at 32-42; it reads MTVYDYCHVGH. 3 residues coordinate Zn(2+): Cys-214, His-239, and Glu-243. Positions 271 to 275 match the 'KMSKS' region motif; it reads KMSKS. An ATP-binding site is contributed by Lys-274.

This sequence belongs to the class-I aminoacyl-tRNA synthetase family. As to quaternary structure, monomer. The cofactor is Zn(2+).

The protein resides in the cytoplasm. The enzyme catalyses tRNA(Cys) + L-cysteine + ATP = L-cysteinyl-tRNA(Cys) + AMP + diphosphate. This chain is Cysteine--tRNA ligase, found in Paraburkholderia xenovorans (strain LB400).